Consider the following 269-residue polypeptide: 4-hydroxy-tetrahydrodipicolinate reductase (269 aa).

NAD(+)-binding positions include 11 to 16 (GASGRM) and Glu37. Residue Arg38 participates in NADP(+) binding. NAD(+)-binding positions include 101–103 (GTT) and 125–128 (AGNM). The Proton donor/acceptor role is filled by His158. His159 provides a ligand contact to (S)-2,3,4,5-tetrahydrodipicolinate. The active-site Proton donor is Lys162. Residue 168-169 (GT) participates in (S)-2,3,4,5-tetrahydrodipicolinate binding.

Belongs to the DapB family.

The protein resides in the cytoplasm. The catalysed reaction is (S)-2,3,4,5-tetrahydrodipicolinate + NAD(+) + H2O = (2S,4S)-4-hydroxy-2,3,4,5-tetrahydrodipicolinate + NADH + H(+). It catalyses the reaction (S)-2,3,4,5-tetrahydrodipicolinate + NADP(+) + H2O = (2S,4S)-4-hydroxy-2,3,4,5-tetrahydrodipicolinate + NADPH + H(+). It functions in the pathway amino-acid biosynthesis; L-lysine biosynthesis via DAP pathway; (S)-tetrahydrodipicolinate from L-aspartate: step 4/4. In terms of biological role, catalyzes the conversion of 4-hydroxy-tetrahydrodipicolinate (HTPA) to tetrahydrodipicolinate. The protein is 4-hydroxy-tetrahydrodipicolinate reductase of Cereibacter sphaeroides (strain ATCC 17029 / ATH 2.4.9) (Rhodobacter sphaeroides).